The primary structure comprises 139 residues: Classical arabinogalactan protein 3 (139 aa).

An N-terminal signal peptide occupies residues 1–21 (MALKTLQALIFLGLFAASCLA). Position 22 is a pyrrolidone carboxylic acid (Gln-22). The disordered stretch occupies residues 30–115 (TFLPPVESPS…PAPRADGPVA (86 aa)). Composition is skewed to pro residues over residues 46–77 (AEPPAPVASPPIPANEPTPVPTTPPTVSPPTT) and 97–107 (PSGPTPAPAPA). A lipid anchor (GPI-anchor amidated aspartate) is attached at Asp-116. The propeptide at 117–139 (SALTNKAFLVSTVIAGALYAVLA) is removed in mature form.

Belongs to the classical AGP family. In terms of processing, O-glycosylated on the hydroxyproline residues. In terms of tissue distribution, expressed at a low level in roots.

The protein resides in the cell membrane. Proteoglycan that seems to be implicated in diverse developmental roles such as differentiation, cell-cell recognition, embryogenesis and programmed cell death. The sequence is that of Classical arabinogalactan protein 3 (AGP3) from Arabidopsis thaliana (Mouse-ear cress).